The chain runs to 181 residues: Interleukin-24 (181 aa).

The first 26 residues, 1 to 26, serve as a signal peptide directing secretion; it reads MSWGLQILPCLSLILLLWNQVPGLEG. Residues cysteine 34 and cysteine 81 are joined by a disulfide bond. An N-linked (GlcNAc...) asparagine glycan is attached at asparagine 74. A Glycyl lysine isopeptide (Lys-Gly) (interchain with G-Cter in ubiquitin) cross-link involves residue lysine 97.

The protein belongs to the IL-10 family. Post-translationally, glycosylated. In terms of processing, ubiquitination at Lys-97 promotes proteasomal degradation. As to expression, selectively expressed by Th2 cells. Expressed in the liver.

It localises to the secreted. Its function is as follows. Multifunctional cytokine mainly produced by T-cells that plays a regulatory role in immune response, tissue homeostasis, host defense, and oncogenesis. Possesses antiviral functions and induces the type I interferon response during influenza infection. Signals through two receptor complexes IL20RA/IL20RB or IL20RB/IL22RA1. In turn, stimulates the JAK1-STAT3 and MAPK pathways and promotes the secretion of pro-inflammatory mediators including IL8 and MMP1. Intracellularly, maintains endoplasmic reticulum homeostasis by restricting the eIF2alpha-CHOP pathway-mediated stress signal. In addition, acts as a quality control mechanism for the ubiquitin proteasome system by alerting the cell to proteasome dysfunction through activation of PKR/EIF2AK2. This chain is Interleukin-24 (Il24), found in Mus musculus (Mouse).